Reading from the N-terminus, the 692-residue chain is Furin-like protease kpc-1 (692 aa).

The first 33 residues, 1-33 (MSNISWYRHCSVRLQLVTLALFLLLGSASLGSA), serve as a signal peptide directing secretion. Asparagine 3 carries N-linked (GlcNAc...) asparagine glycosylation. Positions 34-139 (HIDEEFEDDV…QQVAKRRVKR (106 aa)) are excised as a propeptide. Residues 140-670 (GYRRIRRHTD…RSVQMEATSS (531 aa)) are Lumenal-facing. Positions 152-177 (DIFEEDDDGTQISKSRNRKHPDPNDP) are disordered. A Ca(2+)-binding site is contributed by aspartate 176. Positions 182–503 (MWYLNRGEHH…YGLMDAGAMV (322 aa)) constitute a Peptidase S8 domain. Aspartate 221 acts as the Charge relay system in catalysis. Residue aspartate 222 participates in substrate binding. Ca(2+) is bound by residues aspartate 230, aspartate 242, aspartate 247, and aspartate 249. Residues 230–249 (DISPNYDERASYDVNDRDND) form a disordered region. Residue 259–260 (EN) coordinates substrate. Residue histidine 262 is the Charge relay system of the active site. Isoleucine 273 lines the Ca(2+) pocket. A glycan (N-linked (GlcNAc...) asparagine) is linked at asparagine 275. Ca(2+) contacts are provided by asparagine 276, leucine 278, and isoleucine 280. 2 disulfides stabilise this stretch: cysteine 279-cysteine 428 and cysteine 371-cysteine 401. Residues glutamate 304, 321–326 (SWGPDD), aspartate 332, and 360–363 (ASGN) contribute to the substrate site. Ca(2+) is bound at residue aspartate 326. A Ca(2+)-binding site is contributed by aspartate 369. Substrate is bound by residues aspartate 374 and tyrosine 376. Glutamate 399 provides a ligand contact to Ca(2+). Serine 436 acts as the Charge relay system in catalysis. A substrate-binding site is contributed by serine 436. Residues asparagine 455 and asparagine 487 are each glycosylated (N-linked (GlcNAc...) asparagine). A P/Homo B domain is found at 512–646 (VDEQHRCRQF…ELVLYGTDRE (135 aa)). Cysteine 518 and cysteine 544 are oxidised to a cystine. The short motif at 570–572 (RGD) is the Cell attachment site element. A helical membrane pass occupies residues 671-692 (GTQYSIFHVITLVILTFSQILY).

It belongs to the peptidase S8 family. Furin subfamily. In terms of assembly, interacts (via extracellular domain) with receptor dma-1 (via extracellular domain); the interaction promotes dma-1 internalization. It depends on Ca(2+) as a cofactor. As to expression, expressed in the nervous system including the ventral nerve cord, the nerve ring and the retrovesicular ganglion, and in epithelial cells. Expressed in IL2 neurons. Expressed in PVD mechanosensory neurons. Expressed in pharynx with strong expression in the g2 pharyngeal gland cells and vpi pharyngeal intestinal valve cells. Expressed in intestine.

It is found in the cell membrane. Its subcellular location is the perikaryon. The protein localises to the cell projection. It localises to the axon. Functionally, furin-like protease which cleaves proproteins at the RX(K/R)R consensus motif. During neuronal development, regulates the formation and extension of dendrite branches and cellular positioning of various type of neurons. Together with chin-1 and cdc-42, plays a role in the development of the neuropil and is required for the guidance of axons from neurons, including SubL pioneer neurons and AIY interneurons, into the nerve ring. Its role in axon guidance in glia and pioneer neurons may be through ensuring the fmi-1 protein is correctly localized to the nerve ring. Promotes the formation, extension and self-avoidance of dendritic branches of PVD and FLP mechanosensory neurons. In PVD neurons, regulates plasma membrane levels of branching receptor dma-1 by targeting it to late endosomes and thus promotes normal dendrite branching and dendrite self-avoidance. Also controls dendrite extension in AIY and D-type motoneurons, dendrite branching in AQR sensory neurons and VC4/5 motoneurons, the normal number of dendritic branches in AVL neurons and the positioning of HSN and ALM/PLM neurons. Dispensable for maintaining dendrite branching in adults. Also regulates dauer-specific dendritic branching of IL2 neurons and dauer-specific nictation behavior. Under adverse environmental conditions, may promote dauer formation by processing insulin-like proteins ins-1 and ins-18, two daf-2/InsR antagonists. This Caenorhabditis elegans protein is Furin-like protease kpc-1.